The primary structure comprises 445 residues: Phosphoglucosamine mutase (445 aa).

Residue Ser101 is the Phosphoserine intermediate of the active site. Mg(2+) contacts are provided by Ser101, Asp240, Asp242, and Asp244. Phosphoserine is present on Ser101.

It belongs to the phosphohexose mutase family. Requires Mg(2+) as cofactor. Activated by phosphorylation.

It catalyses the reaction alpha-D-glucosamine 1-phosphate = D-glucosamine 6-phosphate. Catalyzes the conversion of glucosamine-6-phosphate to glucosamine-1-phosphate. In Pseudomonas aeruginosa (strain UCBPP-PA14), this protein is Phosphoglucosamine mutase.